The chain runs to 798 residues: Cold shock domain-containing protein E1 (798 aa).

An N-acetylmethionine modification is found at methionine 1. In terms of domain architecture, CSD 1 spans 26-87 (ETGVIEKLLT…RTGKPIAVKL (62 aa)). Position 81 is an N6-acetyllysine (lysine 81). Lysine 91 participates in a covalent cross-link: Glycyl lysine isopeptide (Lys-Gly) (interchain with G-Cter in SUMO2). Serine 123 is modified (phosphoserine). A CSD 2; truncated domain is found at 136 to 179 (VFYLTYTPEDVEGNVQLETGDKINFVIDNNKHTGAVSARNIMLL). Residues 186–245 (CQGVVCAMKEAFGFIERGDVVKEIFFHYSEFKGDLETLQPGDDVEFTIKDRNGKEVATDV) form the CSD 3 domain. Residue serine 276 is modified to Phosphoserine. One can recognise a CSD 4; truncated domain in the interval 297–337 (LPFGDKDTKSKVTLLEGDHVRFNISTDRRDKLERATNIEVL). 2 CSD domains span residues 349-410 (EMGV…AIRI) and 447-507 (NKGK…ATCV). Serine 514 is subject to Phosphoserine. A CSD 7 domain is found at 519-579 (LLGYVATLKD…KGNKVSAEKV (61 aa)). Serine 584 is modified (phosphoserine). 2 CSD domains span residues 610–670 (PTQT…AYNI) and 674–735 (RRAT…ACNV). The SUZ-C domain maps to 748–789 (PRPDRLVNRLKNITLDDASAPRLMVLRQPRGPDNSMGFGAER). Position 761 is a phosphothreonine (threonine 761).

The protein belongs to the UNR family. Component of a multi subunit autoregulatory ribonucleoprotein complex (ARC), at least composed of IGF2BP1, PABPC1 and CSDE1. Interacts with STRAP. Part of a complex associated with the FOS mCRD domain and consisting of PABPC1, PAIP1, HNRPD and SYNCRIP. The interaction with PABPC1 is direct and RNA-independent. Interacts with EIF4ENIF1/4E-T.

It is found in the cytoplasm. It localises to the stress granule. The protein localises to the P-body. Its function is as follows. RNA-binding protein involved in translationally coupled mRNA turnover. Implicated with other RNA-binding proteins in the cytoplasmic deadenylation/translational and decay interplay of the FOS mRNA mediated by the major coding-region determinant of instability (mCRD) domain. Required for efficient formation of stress granules. In terms of biological role, (Microbial infection) Required for internal initiation of translation of human rhinovirus RNA. The protein is Cold shock domain-containing protein E1 of Homo sapiens (Human).